Consider the following 245-residue polypeptide: MDRSPLFLIIMGAPGSGKGTQSKLLASQLSLLHISSGDLLRDAVSKDTPLSQEIKSYLDQGKLLPDTLVWKLVHEKLDEFQQDTLLRRLSFLSRSENSAILDGFPRTVTQAKLLHEFLSSYFPNYKVILLDISDEEVLNRLTSRYICPACQGIYNEQQGFSSCPKCSVELIRRSDDTLEVILDRIQTYKQETQPVLDYYTEKQKLITIDANAPTQQVFQSILDSLSASLVYQERDCCNCDCDDED.

Residue 15 to 20 coordinates ATP; it reads GSGKGT. The interval 35-64 is NMP; sequence SSGDLLRDAVSKDTPLSQEIKSYLDQGKLL. AMP-binding positions include S36, R41, 62-64, 103-106, and Q110; these read KLL and GFPR. Residues 143-176 are LID; the sequence is SRYICPACQGIYNEQQGFSSCPKCSVELIRRSDD. R144 contributes to the ATP binding site. The Zn(2+) site is built by C147 and C150. 153-154 is a binding site for ATP; that stretch reads IY. 2 residues coordinate Zn(2+): C163 and C166. AMP contacts are provided by R173 and R184. ATP is bound at residue A212.

Belongs to the adenylate kinase family. As to quaternary structure, monomer.

The protein resides in the cytoplasm. The catalysed reaction is AMP + ATP = 2 ADP. Its pathway is purine metabolism; AMP biosynthesis via salvage pathway; AMP from ADP: step 1/1. In terms of biological role, catalyzes the reversible transfer of the terminal phosphate group between ATP and AMP. Plays an important role in cellular energy homeostasis and in adenine nucleotide metabolism. This chain is Adenylate kinase, found in Chlamydia trachomatis serovar A (strain ATCC VR-571B / DSM 19440 / HAR-13).